Here is a 281-residue protein sequence, read N- to C-terminus: tRNA dimethylallyltransferase (281 aa).

Interaction with substrate tRNA regions lie at residues D13–Q16 and Q133–R137.

The protein belongs to the IPP transferase family. In terms of assembly, monomer. Mg(2+) is required as a cofactor.

The catalysed reaction is adenosine(37) in tRNA + dimethylallyl diphosphate = N(6)-dimethylallyladenosine(37) in tRNA + diphosphate. In terms of biological role, catalyzes the transfer of a dimethylallyl group onto the adenine at position 37 in tRNAs that read codons beginning with uridine, leading to the formation of N6-(dimethylallyl)adenosine (i(6)A). This chain is tRNA dimethylallyltransferase, found in Novosphingobium aromaticivorans (strain ATCC 700278 / DSM 12444 / CCUG 56034 / CIP 105152 / NBRC 16084 / F199).